We begin with the raw amino-acid sequence, 152 residues long: Putative toxin MJ1304 (152 aa).

Positions 15-135 (IKRAEEDLEV…EECLKDAENV (121 aa)) constitute an HEPN domain.

Putative toxin component of a putative type VII toxin-antitoxin (TA) system. Its cognate antitoxin might be MJ1305. The polypeptide is Putative toxin MJ1304 (Methanocaldococcus jannaschii (strain ATCC 43067 / DSM 2661 / JAL-1 / JCM 10045 / NBRC 100440) (Methanococcus jannaschii)).